The primary structure comprises 514 residues: Na(+)/H(+) antiporter NhaB (514 aa).

A run of 11 helical transmembrane segments spans residues 21 to 41, 43 to 63, 88 to 108, 143 to 163, 203 to 223, 239 to 259, 304 to 324, 349 to 369, 390 to 410, 448 to 468, and 484 to 504; these read LAIV…SPFI, GWLL…CYPL, IMAN…IFFM, FLDA…FYGV, LMMH…VGEP, FFLR…LTCF, ALIA…VGLI, QESL…AVII, LALF…VFVA, ATPN…SPLI, and IVLS…ATIW.

The protein belongs to the NhaB Na(+)/H(+) (TC 2.A.34) antiporter family.

The protein localises to the cell inner membrane. The enzyme catalyses 2 Na(+)(in) + 3 H(+)(out) = 2 Na(+)(out) + 3 H(+)(in). Na(+)/H(+) antiporter that extrudes sodium in exchange for external protons. The polypeptide is Na(+)/H(+) antiporter NhaB (Haemophilus influenzae (strain 86-028NP)).